The following is a 908-amino-acid chain: Translation initiation factor IF-2 (908 aa).

2 disordered regions span residues 52–229 and 241–316; these read QSHG…AEEA and AGQY…SAQH. Positions 65–84 are enriched in polar residues; sequence KSKTTSTARVTGSSGKSKSV. Composition is skewed to basic and acidic residues over residues 94–108, 120–138, 176–185, 193–229, 270–280, and 294–303; these read FEKP…ELAA, AAKD…EERQ, IEVKPKEQPK, PKVE…AEEA, SFEKERREIKR, and KNQDEREIKN. In terms of domain architecture, tr-type G spans 409–578; that stretch reads TRPPVVTIMG…SLQAELMELE (170 aa). Residues 418-425 are G1; that stretch reads GHVDHGKT. GTP is bound at residue 418 to 425; sequence GHVDHGKT. The tract at residues 443–447 is G2; it reads GITQH. Residues 464-467 form a G3 region; the sequence is DTPG. GTP is bound by residues 464–468 and 518–521; these read DTPGH and NKMD. The segment at 518–521 is G4; it reads NKMD. Residues 554–556 form a G5 region; sequence SAK.

Belongs to the TRAFAC class translation factor GTPase superfamily. Classic translation factor GTPase family. IF-2 subfamily.

Its subcellular location is the cytoplasm. Functionally, one of the essential components for the initiation of protein synthesis. Protects formylmethionyl-tRNA from spontaneous hydrolysis and promotes its binding to the 30S ribosomal subunits. Also involved in the hydrolysis of GTP during the formation of the 70S ribosomal complex. In Psychrobacter arcticus (strain DSM 17307 / VKM B-2377 / 273-4), this protein is Translation initiation factor IF-2.